We begin with the raw amino-acid sequence, 856 residues long: MKVKGIQGNWQNWWKWGTLILGLVIICSAAENLWVTVYYGVPVWKDAETTLFCASDAKAYDTEKHNVWATHACVPTDPNPQELSLGNVTEKFDMWKNNMVEQMHEDVISLWDQSLKPCVKLTPLCVTLSCHNITIKDNNTNVDTEMKEEIKNCSYNMTTELRDKQRKIYSLFYRLDIVPIGGNSSNGDSSKYRLINCNTSAITQACPKVSFEPIPIHYCAPAGFAILKCRDEEFEGKGPCRNVSTVQCTHGIRPVVSTQLLLNGSLAEGEVRIRSENFTDNAKIIIVQLVKPVNITCMRPNNNTRKSISIGPGRAFFATGDIIGDIRQAHCNVSRTEWNDTLSKVAAQLRKHFVNTSTDIIFANSSGGDVEITTHSFNCGGEFFYCNTSGLFNGTWLNGTSNNTWKIDTVNDTIILPCRIKQIVNMWQRVGQAMYAPPIKGVIKCVSNITGILLTRDGVGNNTSNETFRPGGGDMRDNWRSELYKYKVVKIEPLGVAPTKAKRRVVAREKRAIGMGAFFLGFLGAAGSTMGAASITLTVQARRLLSGIVQQQNNLLRAIEAQQHLLKLTVWGIKQLQARILAVERYLKDQQLLGIWGCSGKIICPTNVPWNSSWSNKSQSDIWDKMTWLEWDKEVSNYTQVIYNLIEESQTQQEINERDLLALDKWANLWNWFDISNWLWYIKIFIMIVGGLIGLRIVFAVLSIINRVRQGYSPLSFQTLTHHQREPDRPERIEEGGGEQDRDRSIRLVSGFLPLAWDDLRSLCLFCYHRLRDCALIAARIVETLIRRGWETLKYLGNLVIYWGQELKNSAINLLDTVAIAVADWTDRVIEVVQRAGRAFLNIPRRIRQGLERALL.

Positions 1-31 are cleaved as a signal peptide; the sequence is MKVKGIQGNWQNWWKWGTLILGLVIICSAAE. The Extracellular portion of the chain corresponds to 32–684; it reads NLWVTVYYGV…ISNWLWYIKI (653 aa). Residues C53 and C73 are joined by a disulfide bond. N-linked (GlcNAc...) asparagine; by host glycans are attached at residues N87, N132, N138, N152, N156, N183, and N198. 5 disulfide bridges follow: C118/C206, C125/C197, C130/C153, C219/C248, and C229/C240. The tract at residues 130–152 is V1; sequence CHNITIKDNNTNVDTEMKEEIKN. The segment at 153-197 is V2; the sequence is CSYNMTTELRDKQRKIYSLFYRLDIVPIGGNSSNGDSSKYRLINC. 9 N-linked (GlcNAc...) asparagine; by host glycosylation sites follow: N242, N263, N277, N294, N302, N332, N339, N355, and N364. The V3 stretch occupies residues 297–330; the sequence is CMRPNNNTRKSISIGPGRAFFATGDIIGDIRQAH. The cysteines at positions 297 and 331 are disulfide-linked. The tract at residues 365 to 375 is CD4-binding loop; that stretch reads SSGGDVEITTH. 2 disulfide bridges follow: C379–C445 and C386–C418. The segment at 386 to 418 is V4; sequence CNTSGLFNGTWLNGTSNNTWKIDTVNDTIILPC. N-linked (GlcNAc...) asparagine; by host glycans are attached at residues N387, N393, N398, N402, N411, N448, N461, N462, and N465. V5 stretches follow at residues 461-471 and 463-471; these read NNTSNETFRPG and TSNETFRPG. The interval 512–532 is fusion peptide; sequence AIGMGAFFLGFLGAAGSTMGA. The tract at residues 574-592 is immunosuppression; that stretch reads KQLQARILAVERYLKDQQL. A disulfide bond links C598 and C604. Residues N611, N616, and N637 are each glycosylated (N-linked (GlcNAc...) asparagine; by host). The stretch at 633–667 forms a coiled coil; it reads KEVSNYTQVIYNLIEESQTQQEINERDLLALDKWA. Positions 662-683 are MPER; binding to GalCer; that stretch reads ALDKWANLWNWFDISNWLWYIK. Residues 685–705 form a helical membrane-spanning segment; sequence FIMIVGGLIGLRIVFAVLSII. Residues 706-856 lie on the Cytoplasmic side of the membrane; it reads NRVRQGYSPL…IRQGLERALL (151 aa). Residues 712–715 carry the YXXL motif; contains endocytosis signal motif; it reads YSPL. The disordered stretch occupies residues 720-742; the sequence is LTHHQREPDRPERIEEGGGEQDR. A compositionally biased stretch (basic and acidic residues) spans 723–742; sequence HQREPDRPERIEEGGGEQDR. The S-palmitoyl cysteine; by host moiety is linked to residue C764. A Di-leucine internalization motif motif is present at residues 855 to 856; that stretch reads LL.

This sequence belongs to the HIV-1 env protein family. As to quaternary structure, the mature envelope protein (Env) consists of a homotrimer of non-covalently associated gp120-gp41 heterodimers. The resulting complex protrudes from the virus surface as a spike. There seems to be as few as 10 spikes on the average virion. Interacts with host CD4, CCR5 and CXCR4. Gp120 also interacts with the C-type lectins CD209/DC-SIGN and CLEC4M/DC-SIGNR (collectively referred to as DC-SIGN(R)). Gp120 and gp41 interact with GalCer. Gp120 interacts with host ITGA4/ITGB7 complex; on CD4+ T-cells, this interaction results in rapid activation of integrin ITGAL/LFA-1, which facilitates efficient cell-to-cell spreading of HIV-1. Gp120 interacts with cell-associated heparan sulfate; this interaction increases virus infectivity on permissive cells and may be involved in infection of CD4- cells. In terms of assembly, the mature envelope protein (Env) consists of a homotrimer of non-covalently associated gp120-gp41 heterodimers. The resulting complex protrudes from the virus surface as a spike. There seems to be as few as 10 spikes on the average virion. Post-translationally, highly glycosylated by host. The high number of glycan on the protein is reffered to as 'glycan shield' because it contributes to hide protein sequence from adaptive immune system. In terms of processing, palmitoylation of the transmembrane protein and of Env polyprotein (prior to its proteolytic cleavage) is essential for their association with host cell membrane lipid rafts. Palmitoylation is therefore required for envelope trafficking to classical lipid rafts, but not for viral replication. Specific enzymatic cleavages in vivo yield mature proteins. Envelope glycoproteins are synthesized as an inactive precursor that is heavily N-glycosylated and processed likely by host cell furin in the Golgi to yield the mature SU and TM proteins. The cleavage site between SU and TM requires the minimal sequence [KR]-X-[KR]-R. About 2 of the 9 disulfide bonds of gp41 are reduced by P4HB/PDI, following binding to CD4 receptor.

The protein resides in the virion membrane. Its subcellular location is the host cell membrane. It is found in the host endosome membrane. Oligomerizes in the host endoplasmic reticulum into predominantly trimers. In a second time, gp160 transits in the host Golgi, where glycosylation is completed. The precursor is then proteolytically cleaved in the trans-Golgi and thereby activated by cellular furin or furin-like proteases to produce gp120 and gp41. Its function is as follows. Attaches the virus to the host lymphoid cell by binding to the primary receptor CD4. This interaction induces a structural rearrangement creating a high affinity binding site for a chemokine coreceptor like CXCR4 and/or CCR5. Acts as a ligand for CD209/DC-SIGN and CLEC4M/DC-SIGNR, which are respectively found on dendritic cells (DCs), and on endothelial cells of liver sinusoids and lymph node sinuses. These interactions allow capture of viral particles at mucosal surfaces by these cells and subsequent transmission to permissive cells. HIV subverts the migration properties of dendritic cells to gain access to CD4+ T-cells in lymph nodes. Virus transmission to permissive T-cells occurs either in trans (without DCs infection, through viral capture and transmission), or in cis (following DCs productive infection, through the usual CD4-gp120 interaction), thereby inducing a robust infection. In trans infection, bound virions remain infectious over days and it is proposed that they are not degraded, but protected in non-lysosomal acidic organelles within the DCs close to the cell membrane thus contributing to the viral infectious potential during DCs' migration from the periphery to the lymphoid tissues. On arrival at lymphoid tissues, intact virions recycle back to DCs' cell surface allowing virus transmission to CD4+ T-cells. Functionally, acts as a class I viral fusion protein. Under the current model, the protein has at least 3 conformational states: pre-fusion native state, pre-hairpin intermediate state, and post-fusion hairpin state. During fusion of viral and target intracellular membranes, the coiled coil regions (heptad repeats) assume a trimer-of-hairpins structure, positioning the fusion peptide in close proximity to the C-terminal region of the ectodomain. The formation of this structure appears to drive apposition and subsequent fusion of viral and target cell membranes. Complete fusion occurs in host cell endosomes and is dynamin-dependent, however some lipid transfer might occur at the plasma membrane. The virus undergoes clathrin-dependent internalization long before endosomal fusion, thus minimizing the surface exposure of conserved viral epitopes during fusion and reducing the efficacy of inhibitors targeting these epitopes. Membranes fusion leads to delivery of the nucleocapsid into the cytoplasm. This chain is Envelope glycoprotein gp160, found in Homo sapiens (Human).